The chain runs to 30 residues: Cycloviolin-C (30 aa).

A cross-link (cyclopeptide (Gly-Asn)) is located at residues 1–30; it reads GIPCGESCVFIPCLTTVAGCSCKNKVCYRN. Disulfide bonds link Cys4-Cys20, Cys8-Cys22, and Cys13-Cys27.

Post-translationally, this is a cyclic peptide.

In terms of biological role, probably participates in a plant defense mechanism. Has anti-HIV activity. This Leonia cymosa (Sacha uba) protein is Cycloviolin-C.